The primary structure comprises 271 residues: Ribosomal RNA small subunit methyltransferase A (271 aa).

S-adenosyl-L-methionine contacts are provided by His14, Leu16, Gly41, Glu63, Asp89, and Asn107.

Belongs to the class I-like SAM-binding methyltransferase superfamily. rRNA adenine N(6)-methyltransferase family. RsmA subfamily.

The protein resides in the cytoplasm. It carries out the reaction adenosine(1518)/adenosine(1519) in 16S rRNA + 4 S-adenosyl-L-methionine = N(6)-dimethyladenosine(1518)/N(6)-dimethyladenosine(1519) in 16S rRNA + 4 S-adenosyl-L-homocysteine + 4 H(+). Specifically dimethylates two adjacent adenosines (A1518 and A1519) in the loop of a conserved hairpin near the 3'-end of 16S rRNA in the 30S particle. May play a critical role in biogenesis of 30S subunits. This chain is Ribosomal RNA small subunit methyltransferase A, found in Lawsonia intracellularis (strain PHE/MN1-00).